The sequence spans 203 residues: Small ribosomal subunit protein uS7B (203 aa).

The protein belongs to the universal ribosomal protein uS7 family. In terms of assembly, component of the small ribosomal subunit (SSU). Mature yeast ribosomes consist of a small (40S) and a large (60S) subunit. The 40S small subunit contains 1 molecule of ribosomal RNA (18S rRNA) and at least 33 different proteins. The large 60S subunit contains 3 rRNA molecules (25S, 5.8S and 5S rRNA) and at least 46 different proteins.

The protein resides in the cytoplasm. Functionally, component of the ribosome, a large ribonucleoprotein complex responsible for the synthesis of proteins in the cell. The small ribosomal subunit (SSU) binds messenger RNAs (mRNAs) and translates the encoded message by selecting cognate aminoacyl-transfer RNA (tRNA) molecules. The large subunit (LSU) contains the ribosomal catalytic site termed the peptidyl transferase center (PTC), which catalyzes the formation of peptide bonds, thereby polymerizing the amino acids delivered by tRNAs into a polypeptide chain. The nascent polypeptides leave the ribosome through a tunnel in the LSU and interact with protein factors that function in enzymatic processing, targeting, and the membrane insertion of nascent chains at the exit of the ribosomal tunnel. The protein is Small ribosomal subunit protein uS7B (rps502) of Schizosaccharomyces pombe (strain 972 / ATCC 24843) (Fission yeast).